Here is a 225-residue protein sequence, read N- to C-terminus: uncharacterized protein (225 aa).

This is an uncharacterized protein from Arabidopsis thaliana (Mouse-ear cress).